A 374-amino-acid chain; its full sequence is Spore germination protein B3 (374 aa).

An N-terminal signal peptide occupies residues M1 to G19. The N-palmitoyl cysteine moiety is linked to residue C20. A lipid anchor (S-diacylglycerol cysteine) is attached at C20.

It belongs to the GerABKC lipoprotein family.

It is found in the cell membrane. Functionally, involved in the response to the germinative mixture of L-asparagine, glucose, fructose and potassium ions (AGFK). Cannot stimulate germination in the absence of gerD and gerK gene products (fructose and glucose receptors respectively). The protein is Spore germination protein B3 (gerBC) of Bacillus subtilis (strain 168).